Consider the following 66-residue polypeptide: UPF0337 protein BP1738 (66 aa).

It belongs to the UPF0337 (CsbD) family.

The sequence is that of UPF0337 protein BP1738 from Bordetella pertussis (strain Tohama I / ATCC BAA-589 / NCTC 13251).